A 353-amino-acid chain; its full sequence is Photosystem II D2 protein (353 aa).

The residue at position 2 (T2) is an N-acetylthreonine. T2 carries the phosphothreonine modification. Residues 41–61 (CAYFALGGWFTGTTFVTSWYT) form a helical membrane-spanning segment. Residue H118 participates in chlorophyll a binding. The chain crosses the membrane as a helical span at residues 125–141 (GFMLRQFELARSVQLRP). 2 residues coordinate pheophytin a: Q130 and N143. Residues 153-166 (VFVSVFLIYPLGQS) traverse the membrane as a helical segment. Position 198 (H198) interacts with chlorophyll a. The chain crosses the membrane as a helical span at residues 208-228 (AALLCAIHGATVENTLFEDGD). 2 residues coordinate a plastoquinone: H215 and F262. Fe cation is bound at residue H215. H269 provides a ligand contact to Fe cation. A helical transmembrane segment spans residues 279-295 (GLWMSALGVVGLALNLR).

This sequence belongs to the reaction center PufL/M/PsbA/D family. As to quaternary structure, PSII is composed of 1 copy each of membrane proteins PsbA, PsbB, PsbC, PsbD, PsbE, PsbF, PsbH, PsbI, PsbJ, PsbK, PsbL, PsbM, PsbT, PsbX, PsbY, PsbZ, Psb30/Ycf12, at least 3 peripheral proteins of the oxygen-evolving complex and a large number of cofactors. It forms dimeric complexes. The D1/D2 heterodimer binds P680, chlorophylls that are the primary electron donor of PSII, and subsequent electron acceptors. It shares a non-heme iron and each subunit binds pheophytin, quinone, additional chlorophylls, carotenoids and lipids. There is also a Cl(-1) ion associated with D1 and D2, which is required for oxygen evolution. The PSII complex binds additional chlorophylls, carotenoids and specific lipids. serves as cofactor.

The protein localises to the plastid. It localises to the chloroplast thylakoid membrane. It catalyses the reaction 2 a plastoquinone + 4 hnu + 2 H2O = 2 a plastoquinol + O2. Its function is as follows. Photosystem II (PSII) is a light-driven water:plastoquinone oxidoreductase that uses light energy to abstract electrons from H(2)O, generating O(2) and a proton gradient subsequently used for ATP formation. It consists of a core antenna complex that captures photons, and an electron transfer chain that converts photonic excitation into a charge separation. The D1/D2 (PsbA/PsbD) reaction center heterodimer binds P680, the primary electron donor of PSII as well as several subsequent electron acceptors. D2 is needed for assembly of a stable PSII complex. The sequence is that of Photosystem II D2 protein from Citrus sinensis (Sweet orange).